We begin with the raw amino-acid sequence, 255 residues long: tRNA (guanine-N(1)-)-methyltransferase (255 aa).

S-adenosyl-L-methionine is bound by residues Gly113 and 133-138; that span reads IGDYVL.

It belongs to the RNA methyltransferase TrmD family. In terms of assembly, homodimer.

It is found in the cytoplasm. It catalyses the reaction guanosine(37) in tRNA + S-adenosyl-L-methionine = N(1)-methylguanosine(37) in tRNA + S-adenosyl-L-homocysteine + H(+). In terms of biological role, specifically methylates guanosine-37 in various tRNAs. The sequence is that of tRNA (guanine-N(1)-)-methyltransferase from Salmonella choleraesuis (strain SC-B67).